A 535-amino-acid chain; its full sequence is UDP-glycosyltransferase stmC (535 aa).

N-linked (GlcNAc...) asparagine glycans are attached at residues N70 and N422. Residues 506–526 (ASNLDLYIVCIAFVAVPVGVA) form a helical membrane-spanning segment.

Belongs to the glycosyltransferase 28 family.

The protein localises to the membrane. The enzyme catalyses stromemycin aglycone + UDP-alpha-D-glucose = stromemycin + UDP + H(+). The catalysed reaction is exophillate aglycone + UDP-alpha-D-glucose = exophillate + UDP + H(+). It functions in the pathway mycotoxin biosynthesis. Functionally, UDP-glycosyltransferase; part of the gene cluster that mediates the biosynthesis of stromemycin, a depside C-glucoside with two unsaturated C9 side chains belonging to aromatic polyketide glycosides. Acts as the tailoring enzyme responsible for 3-C-glucosylation of bininalkenylresorcylic acid produced by the combined action of the HR-PKS stmA and the NR-PKS stmB to yield stromemycin. Possesses a relatively strict acceptor specificity towards bininalkenylresorcylic acid for C-glycosylation, but is able to use several donors including UDP-alpha-D-galactose, UDP-alpha-D-xylose, UDP-alpha-D-4-keto-6-deoxyglucose, UDP-alpha-D-quinovose, and UDP-beta-L-rhamnose. The protein is UDP-glycosyltransferase stmC of Aspergillus ustus.